Here is a 226-residue protein sequence, read N- to C-terminus: Late protein I226R (226 aa).

Positions 1 to 16 (MKMETFLVCLFHNADG) are cleaved as a signal peptide. Residues Asn-142 and Asn-164 are each glycosylated (N-linked (GlcNAc...) asparagine; by host).

It belongs to the asfivirus I226R family.

Its function is as follows. Plays a role in the inhibition of host NF-kappa-B and IRF3 signaling pathways. Mechanistically, promotes the degradation of host IKBKG through enhancing its ubiquitination leading to inhibition of both pathways. In African swine fever virus (isolate Warthog/Namibia/Wart80/1980) (ASFV), this protein is Late protein I226R.